The sequence spans 227 residues: N-acetyltransferase 8 (227 aa).

Residues 1–35 are Cytoplasmic-facing; that stretch reads MASFRIRQFQERDYKQVVDVFSRGMEEHIPTAFRH. Residues 36–56 traverse the membrane as a helical; Signal-anchor for type II membrane protein segment; that stretch reads LLTLPRTLLLLAVVPLAIVLV. The Lumenal segment spans residues 57–227; that stretch reads SGSWFLAVVC…PLPSAQKYEL (171 aa). The region spanning 69–217 is the N-acetyltransferase domain; sequence FLFLFLWFLA…VDVSLIHFIY (149 aa).

The protein belongs to the NAT8 family. As to expression, expressed in brain (at protein level).

It localises to the endoplasmic reticulum-Golgi intermediate compartment membrane. The protein resides in the endoplasmic reticulum membrane. It carries out the reaction L-lysyl-[protein] + acetyl-CoA = N(6)-acetyl-L-lysyl-[protein] + CoA + H(+). The catalysed reaction is an S-substituted L-cysteine + acetyl-CoA = an N-acetyl-L-cysteine-S-conjugate + CoA + H(+). It functions in the pathway sulfur metabolism; glutathione metabolism. Endoplasmic reticulum (ER)-membrane-bound lysine N-acetyltransferase catalyzing the N6-acetylation of lysine residues in the lumen of the ER in various proteins, including PROM1 and BACE1, using acetyl-CoA as acetyl donor. Thereby, may regulate apoptosis through the acetylation and the regulation of the expression of PROM1. May also regulate amyloid beta-peptide secretion through acetylation of BACE1 and the regulation of its expression in neurons. N(6)-lysine acetylation in the ER maintains protein homeostasis and regulates reticulophagy. Alternatively, acetylates the free alpha-amino group of cysteine S-conjugates to form mercapturic acids. This is the final step in a major route for detoxification of a wide variety of reactive electrophiles which starts with their incorporation into glutathione S-conjugates. The glutathione S-conjugates are then further processed into cysteine S-conjugates and finally mercapturic acids which are water soluble and can be readily excreted in urine or bile. This chain is N-acetyltransferase 8 (Nat8), found in Mus musculus (Mouse).